A 555-amino-acid chain; its full sequence is Dihydroxy-acid dehydratase (555 aa).

Asp78 is a Mg(2+) binding site. [2Fe-2S] cluster is bound at residue Cys119. Mg(2+)-binding residues include Asp120 and Lys121. The residue at position 121 (Lys121) is an N6-carboxylysine. A [2Fe-2S] cluster-binding site is contributed by Cys195. Glu444 contacts Mg(2+). The Proton acceptor role is filled by Ser470.

The protein belongs to the IlvD/Edd family. As to quaternary structure, homodimer. The cofactor is [2Fe-2S] cluster. It depends on Mg(2+) as a cofactor.

It carries out the reaction (2R)-2,3-dihydroxy-3-methylbutanoate = 3-methyl-2-oxobutanoate + H2O. It catalyses the reaction (2R,3R)-2,3-dihydroxy-3-methylpentanoate = (S)-3-methyl-2-oxopentanoate + H2O. Its pathway is amino-acid biosynthesis; L-isoleucine biosynthesis; L-isoleucine from 2-oxobutanoate: step 3/4. It functions in the pathway amino-acid biosynthesis; L-valine biosynthesis; L-valine from pyruvate: step 3/4. Functionally, functions in the biosynthesis of branched-chain amino acids. Catalyzes the dehydration of (2R,3R)-2,3-dihydroxy-3-methylpentanoate (2,3-dihydroxy-3-methylvalerate) into 2-oxo-3-methylpentanoate (2-oxo-3-methylvalerate) and of (2R)-2,3-dihydroxy-3-methylbutanoate (2,3-dihydroxyisovalerate) into 2-oxo-3-methylbutanoate (2-oxoisovalerate), the penultimate precursor to L-isoleucine and L-valine, respectively. This is Dihydroxy-acid dehydratase from Dehalococcoides mccartyi (strain ATCC BAA-2266 / KCTC 15142 / 195) (Dehalococcoides ethenogenes (strain 195)).